Consider the following 908-residue polypeptide: Glutamate receptor ionotropic, kainate 2 (908 aa).

A signal peptide spans Met-1–Gly-31. Over Thr-32–Pro-561 the chain is Extracellular. N-linked (GlcNAc...) asparagine glycans are attached at residues Asn-67, Asn-73, Asn-275, Asn-378, Asn-412, Asn-423, and Asn-430. Residues Cys-96 and Cys-347 are joined by a disulfide bond. Pro-516, Ala-518, and Arg-523 together coordinate L-glutamate. The N-linked (GlcNAc...) asparagine glycan is linked to Asn-546. Residues Asp-562–Ala-582 traverse the membrane as a helical segment. At Arg-583–Gly-638 the chain is on the cytoplasmic side. A helical transmembrane segment spans residues Ile-639–Leu-659. Topologically, residues Thr-660 to Asn-819 are extracellular. Positions 689, 690, and 738 each coordinate L-glutamate. An intrachain disulfide couples Cys-750 to Cys-804. The N-linked (GlcNAc...) asparagine glycan is linked to Asn-751. The helical transmembrane segment at Ile-820–Gly-840 threads the bilayer. Topologically, residues Glu-841–Ala-908 are cytoplasmic. A phosphoserine; by PKC mark is found at Ser-846 and Ser-868. A Glycyl lysine isopeptide (Lys-Gly) (interchain with G-Cter in SUMO1) cross-link involves residue Lys-886.

Belongs to the glutamate-gated ion channel (TC 1.A.10.1) family. GRIK2 subfamily. In terms of assembly, homotetramer and heterotetramer with GRIK5. Tetramers may be formed by the dimerization of dimers. Assembles into a kainate-gated homomeric channel that does not bind AMPA. Can form functional heteromeric receptors with GRIK4 and GRIK5. Can form functional heteromeric receptors with GRIK3. Interacts with DLG4. Interacts with NETO2. Interacts (via C-terminus) with KLHL17 (via kelch repeats); the interaction targets GRIK2 for degradation via ubiquitin-proteasome pathway. Sumoylation mediates kainate receptor-mediated endocytosis and regulates synaptic transmission. Sumoylation is enhanced by PIAS3 and desumoylated by SENP1. In terms of processing, ubiquitinated. Ubiquitination regulates the GRIK2 levels at the synapse by leading kainate receptor degradation through proteasome. Post-translationally, phosphorylated by PKC at Ser-868 upon agonist activation, this directly enhance sumoylation. Highest expression is found in the olfactory lobe, piriform cortex, dentate gyrus, hippocampus, granular cell layer of the cerebellum, and in caudate-putamen.

The protein resides in the cell membrane. Its subcellular location is the postsynaptic cell membrane. The catalysed reaction is Ca(2+)(in) = Ca(2+)(out). It carries out the reaction Na(+)(in) = Na(+)(out). Cold receptor activity activated by temperatures between 10-19 degrees Celsius. In terms of biological role, ionotropic glutamate receptor that functions as a cation-permeable ligand-gated ion channel, gated by L-glutamate and the glutamatergic agonist kainic acid. L-glutamate acts as an excitatory neurotransmitter at many synapses in the central nervous system. Binding of the excitatory neurotransmitter L-glutamate induces a conformation change, leading to the opening of the cation channel, and thereby converts the chemical signal to an electrical impulse. The receptor then desensitizes rapidly and enters a transient inactive state, characterized by the presence of bound agonist. Modulates cell surface expression of NETO2. In association with GRIK3, involved in presynaptic facilitation of glutamate release at hippocampal mossy fiber synapses. Functionally, independent of its ionotropic glutamate receptor activity, acts as a thermoreceptor conferring sensitivity to cold temperatures. Functions in dorsal root ganglion neurons. The sequence is that of Glutamate receptor ionotropic, kainate 2 (Grik2) from Rattus norvegicus (Rat).